Consider the following 147-residue polypeptide: Small ribosomal subunit protein bS16 (147 aa).

The interval 89-147 is disordered; that stretch reads AWTHGNNPKKAEPGKKAQERAKERADKAEAKAAAAAEAAAAPAEEAPAEAAPAEETSES. The span at 97–118 shows a compositional bias: basic and acidic residues; sequence KKAEPGKKAQERAKERADKAEA. Residues 119 to 147 are compositionally biased toward low complexity; sequence KAAAAAEAAAAPAEEAPAEAAPAEETSES.

This sequence belongs to the bacterial ribosomal protein bS16 family.

This Hyphomonas neptunium (strain ATCC 15444) protein is Small ribosomal subunit protein bS16.